Reading from the N-terminus, the 510-residue chain is Beta-glucosidase 12 (510 aa).

The first 24 residues, 1–24, serve as a signal peptide directing secretion; that stretch reads MAAAGAMPGGLLLTFLLLAVVASG. Glutamine 53 lines the a beta-D-glucoside pocket. N-linked (GlcNAc...) asparagine glycosylation is present at asparagine 122. Residues histidine 157 and 202–203 each bind a beta-D-glucoside; that span reads NE. The active-site Proton donor is glutamate 203. Intrachain disulfides connect cysteine 208–cysteine 243 and cysteine 222–cysteine 230. Asparagine 229 carries N-linked (GlcNAc...) asparagine glycosylation. A beta-D-glucoside is bound at residue tyrosine 346. 2 N-linked (GlcNAc...) asparagine glycosylation sites follow: asparagine 361 and asparagine 371. Glutamate 417 contributes to the a beta-D-glucoside binding site. The active-site Nucleophile is glutamate 417. Asparagine 425 carries an N-linked (GlcNAc...) asparagine glycan. A beta-D-glucoside is bound by residues tryptophan 466, 473–474, and phenylalanine 482; that span reads EW.

It belongs to the glycosyl hydrolase 1 family.

The protein localises to the secreted. It catalyses the reaction Hydrolysis of terminal, non-reducing beta-D-glucosyl residues with release of beta-D-glucose.. Hydrolyzes p-nitrophenyl beta-D-glucoside, p-nitrophenyl beta-D-galactoside, p-nitrophenyl beta-D-xyloside, p-nitrophenyl beta-D-fucoside, p-nitrophenyl beta-L-arabinoside, cello-oligosaccharides and laminaribiose. The sequence is that of Beta-glucosidase 12 from Oryza sativa subsp. indica (Rice).